A 432-amino-acid polypeptide reads, in one-letter code: Adenylosuccinate synthetase (432 aa).

Residues 13–19 (GDEGKGK) and 41–43 (GHT) contribute to the GTP site. The Proton acceptor role is filled by aspartate 14. Aspartate 14 and glycine 41 together coordinate Mg(2+). Residues 14-17 (DEGK), 39-42 (NAGH), threonine 130, arginine 144, glutamine 225, threonine 240, and arginine 304 contribute to the IMP site. Catalysis depends on histidine 42, which acts as the Proton donor. 300–306 (ATTGRSR) lines the substrate pocket. GTP-binding positions include arginine 306, 332–334 (KLD), and 415–417 (STG).

The protein belongs to the adenylosuccinate synthetase family. As to quaternary structure, homodimer. It depends on Mg(2+) as a cofactor.

It localises to the cytoplasm. It catalyses the reaction IMP + L-aspartate + GTP = N(6)-(1,2-dicarboxyethyl)-AMP + GDP + phosphate + 2 H(+). Its pathway is purine metabolism; AMP biosynthesis via de novo pathway; AMP from IMP: step 1/2. Plays an important role in the de novo pathway of purine nucleotide biosynthesis. Catalyzes the first committed step in the biosynthesis of AMP from IMP. This is Adenylosuccinate synthetase from Yersinia enterocolitica serotype O:8 / biotype 1B (strain NCTC 13174 / 8081).